A 341-amino-acid polypeptide reads, in one-letter code: Platelet-activating factor receptor (341 aa).

The Extracellular portion of the chain corresponds to 1–16; sequence MEHNGSFRVDSEFRYT. Residue asparagine 4 is glycosylated (N-linked (GlcNAc...) asparagine). Residues 17–38 traverse the membrane as a helical segment; it reads LFPIVYSVIFILGVVANGYVLW. The Cytoplasmic portion of the chain corresponds to 39-54; it reads VFANLYPSKKLNEIKI. Residues 55-74 form a helical membrane-spanning segment; sequence FMVNLTMADLLFLITLPLWI. The Extracellular portion of the chain corresponds to 75-91; it reads VYYYNEGDWILPNFLCN. Cysteine 90 and cysteine 173 form a disulfide bridge. A helical transmembrane segment spans residues 92–113; it reads VAGCLFFINTYCSVAFLGVITY. At 114 to 133 the chain is on the cytoplasmic side; that stretch reads NRYQAVAYPIKTAQATTRKR. The chain crosses the membrane as a helical span at residues 134–155; sequence GISLSLIIWVSIVATASYFLAT. The Extracellular portion of the chain corresponds to 156–184; that stretch reads DSTNLVPNKDGSGNITRCFEHYEPYSVPI. A glycan (N-linked (GlcNAc...) asparagine) is linked at asparagine 169. A helical membrane pass occupies residues 185 to 205; sequence LVVHVFIAFCFFLVFFLIFYC. Topologically, residues 206–233 are cytoplasmic; it reads NLVIIHTLLTQPMRQQRKAGVKRRALWM. The helical transmembrane segment at 234 to 254 threads the bilayer; it reads VCTVLAVFIICFVPHHVVQLP. Residues 255–275 lie on the Extracellular side of the membrane; the sequence is WTLAELGYQTNFHQAINDAHQ. Residues 276 to 295 traverse the membrane as a helical segment; sequence ITLCLLSTNCVLDPVIYCFL. The Cytoplasmic segment spans residues 296–341; the sequence is TKKFRKHLSEKFYSMRSSRKCSRATSDTCTEVIVPANQTPIVSLKN.

It belongs to the G-protein coupled receptor 1 family. Interacts with ARRB1. Found in a range of organs. Expressed most strongly in spleen, followed by skeletal muscle, lung and small intestine. Expressed at moderate levels in the heart. Expressed at relatively low levels in the brain, liver and kidney.

The protein localises to the cell membrane. Receptor for platelet activating factor, a chemotactic phospholipid mediator that possesses potent inflammatory, smooth-muscle contractile and hypotensive activity. Seems to mediate its action via a G protein that activates a phosphatidylinositol-calcium second messenger system. In Mus musculus (Mouse), this protein is Platelet-activating factor receptor (Ptafr).